A 521-amino-acid chain; its full sequence is Melanopsin (521 aa).

The Extracellular portion of the chain corresponds to 1 to 71 (MDSPSGPRVL…VDVPDHAHYT (71 aa)). Residues N30 and N34 are each glycosylated (N-linked (GlcNAc...) asparagine). Residues 72-92 (LGTVILLVGLTGMLGNLTVIY) form a helical membrane-spanning segment. Residues 93-106 (TFCRNRGLRTPANM) are Cytoplasmic-facing. Residues 107–127 (FIINLAVSDFLMSVTQAPVFF) form a helical membrane-spanning segment. Residues 128-143 (ASSLYKKWLFGETGCE) are Extracellular-facing. C142 and C220 are joined by a disulfide. A helical membrane pass occupies residues 144 to 164 (FYAFCGAVFGITSMITLTAIA). Over 165-187 (MDRYLVITRPLATIGRGSKRRTA) the chain is Cytoplasmic. A helical transmembrane segment spans residues 188–208 (LVLLGVWLYALAWSLPPFFGW). At 209 to 237 (SAYVPEGLLTSCSWDYMTFTPQVRAYTML) the chain is on the extracellular side. The helical transmembrane segment at 238–258 (LFCFVFFLPLLIIIFCYIFIF) threads the bilayer. Residues 259–293 (RAIRETGRACEGCGESPLRQRRQWQRLQSEWKMAK) lie on the Cytoplasmic side of the membrane. The chain crosses the membrane as a helical span at residues 294 to 314 (VALIVILLFVLSWAPYSTVAL). The Extracellular segment spans residues 315–329 (VAFAGYSHILTPYMS). Residues 330–350 (SVPAVIAKASAIHNPIIYAIT) traverse the membrane as a helical segment. K337 is subject to N6-(retinylidene)lysine. Topologically, residues 351 to 521 (HPKYRVAIAQ…LEDDVTLRHL (171 aa)) are cytoplasmic. Residues 445-486 (GELKASSSPQVQRSKTPKVPGPSTCRPMKGQGARPSSLRGDQ) form a disordered region. Residues 449 to 458 (ASSSPQVQRS) are compositionally biased toward polar residues.

The protein belongs to the G-protein coupled receptor 1 family. Opsin subfamily. As to expression, expressed in the retinal pigment epithelium and ganglion cell layer (at protein level). Also expressed in amacrine cell layers of the retina. Weakly expressed in vibrissae, and tail. Observed with processes in the outer strata of inner plexiform layer (IPL) close to the inner nuclear layer (INL) or is found to be bistratified with processes located both in the inner (ON) or outer (OFF) layers of the IPL (at protein level). A second population of isoform 1 is identified in processes which are confined to the inner layer of the IPL near to the ganglion cell layer (GCL) (at protein level). In terms of tissue distribution, about 40 times more abundant than isoform 1 in the retina (at protein level). Isoform 2 is involved in processes localized to the outer IPL or is bistratified with processes in both the inner and outer layers of the IPL (at protein level). Isoform 2 is absent in the processes confined only to the inner layer of the IPL (at protein level).

Its subcellular location is the cell membrane. It localises to the cell projection. The protein localises to the axon. The protein resides in the dendrite. It is found in the perikaryon. Functionally, photoreceptor that binds cis-retinaldehydes. Contributes to pupillar reflex, photoentrainment and other non-image forming responses to light. May be involved in the optokinetic visual tracking response. May be involved in the regulation of retinal hyaloid vessel growth and regression. The protein is Melanopsin (Opn4) of Mus musculus (Mouse).